The sequence spans 201 residues: Kunitz type trypsin inhibitor 104 (201 aa).

A signal peptide spans 1–24 (MSTRSLTIFILAHVWLLMATTSIA). Cystine bridges form between cysteine 63–cysteine 110, cysteine 161–cysteine 173, and cysteine 166–cysteine 169.

It belongs to the protease inhibitor I3 (leguminous Kunitz-type inhibitor) family. As to quaternary structure, interacts with CP.

The protein resides in the secreted. The protein localises to the extracellular space. Its subcellular location is the apoplast. In terms of biological role, protease inhibitor involved in the control of mycorrhiza establishment and arbuscule development during root colonization by arbuscular mycorrhizal (AM) fungi (e.g. Rhizophagus irregularis). This is Kunitz type trypsin inhibitor 104 from Medicago truncatula (Barrel medic).